The sequence spans 194 residues: Ion-translocating oxidoreductase complex subunit B (194 aa).

A hydrophobic region spans residues 1–26; the sequence is MSGVLIAVAALLALAAVFGAVLGFAS. A 4Fe-4S domain is found at 32-90; that stretch reads EGDPIVDQIDSLLPQTQCGQCGHPGCRPYAEAIAEGEEHNRCPPGGQDTVVALSELLGR. 12 residues coordinate [4Fe-4S] cluster: C49, C52, C57, C73, C116, C119, C122, C126, C146, C149, C152, and C156. 2 4Fe-4S ferredoxin-type domains span residues 107 to 136 and 137 to 166; these read KVAY…GAAK and LMHT…MLEV.

This sequence belongs to the 4Fe4S bacterial-type ferredoxin family. RnfB subfamily. In terms of assembly, the complex is composed of six subunits: RnfA, RnfB, RnfC, RnfD, RnfE and RnfG. Requires [4Fe-4S] cluster as cofactor.

The protein resides in the cell inner membrane. Its function is as follows. Part of a membrane-bound complex that couples electron transfer with translocation of ions across the membrane. This chain is Ion-translocating oxidoreductase complex subunit B, found in Alcanivorax borkumensis (strain ATCC 700651 / DSM 11573 / NCIMB 13689 / SK2).